We begin with the raw amino-acid sequence, 254 residues long: Phosphoribosylaminoimidazole-succinocarboxamide synthase 1 (254 aa).

Belongs to the SAICAR synthetase family.

It carries out the reaction 5-amino-1-(5-phospho-D-ribosyl)imidazole-4-carboxylate + L-aspartate + ATP = (2S)-2-[5-amino-1-(5-phospho-beta-D-ribosyl)imidazole-4-carboxamido]succinate + ADP + phosphate + 2 H(+). It functions in the pathway purine metabolism; IMP biosynthesis via de novo pathway; 5-amino-1-(5-phospho-D-ribosyl)imidazole-4-carboxamide from 5-amino-1-(5-phospho-D-ribosyl)imidazole-4-carboxylate: step 1/2. The sequence is that of Phosphoribosylaminoimidazole-succinocarboxamide synthase 1 (purC1) from Agrobacterium fabrum (strain C58 / ATCC 33970) (Agrobacterium tumefaciens (strain C58)).